A 575-amino-acid polypeptide reads, in one-letter code: Proline--tRNA ligase (575 aa).

Belongs to the class-II aminoacyl-tRNA synthetase family. ProS type 1 subfamily. As to quaternary structure, homodimer.

It is found in the cytoplasm. The catalysed reaction is tRNA(Pro) + L-proline + ATP = L-prolyl-tRNA(Pro) + AMP + diphosphate. Its function is as follows. Catalyzes the attachment of proline to tRNA(Pro) in a two-step reaction: proline is first activated by ATP to form Pro-AMP and then transferred to the acceptor end of tRNA(Pro). As ProRS can inadvertently accommodate and process non-cognate amino acids such as alanine and cysteine, to avoid such errors it has two additional distinct editing activities against alanine. One activity is designated as 'pretransfer' editing and involves the tRNA(Pro)-independent hydrolysis of activated Ala-AMP. The other activity is designated 'posttransfer' editing and involves deacylation of mischarged Ala-tRNA(Pro). The misacylated Cys-tRNA(Pro) is not edited by ProRS. This is Proline--tRNA ligase from Pseudothermotoga lettingae (strain ATCC BAA-301 / DSM 14385 / NBRC 107922 / TMO) (Thermotoga lettingae).